A 232-amino-acid chain; its full sequence is GDT1-like protein 5 (232 aa).

The next 6 helical transmembrane spans lie at 13–33 (LAMT…AILA), 40–60 (LVLA…VSLG), 72–92 (THHV…WEGF), 135–155 (PFVL…TFFG), 175–195 (FGVV…AVMG), and 207–227 (MVGL…YLSG).

The protein belongs to the GDT1 family.

It is found in the membrane. The chain is GDT1-like protein 5 from Oryza sativa subsp. japonica (Rice).